Here is a 254-residue protein sequence, read N- to C-terminus: Receptor expression-enhancing protein 2 (254 aa).

Helical transmembrane passes span 1 to 21 (MVSWIISRLVVLIFGTLYPAY) and 35 to 55 (YVKWMMYWIVFAFFTTAETLT). The residue at position 152 (S152) is a Phosphoserine. The tract at residues 164-254 (ALPLQGPDGR…KKTSAGGDSA (91 aa)) is disordered. The span at 195-204 (SVRSGTNQAD) shows a compositional bias: polar residues. Positions 205 to 219 (PRTEISEDDTGDKAP) are enriched in basic and acidic residues.

The protein belongs to the DP1 family. Interacts with odorant receptor proteins.

It is found in the membrane. In terms of biological role, required for endoplasmic reticulum (ER) network formation, shaping and remodeling. May enhance the cell surface expression of odorant receptors. This is Receptor expression-enhancing protein 2 (REEP2) from Bos taurus (Bovine).